Consider the following 76-residue polypeptide: UPF0291 protein BA_1897/GBAA_1897/BAS1759 (76 aa).

It belongs to the UPF0291 family.

The protein resides in the cytoplasm. This chain is UPF0291 protein BA_1897/GBAA_1897/BAS1759, found in Bacillus anthracis.